A 266-amino-acid chain; its full sequence is Undecaprenyl-diphosphatase (266 aa).

The next 8 membrane-spanning stretches (helical) occupy residues methionine 1–isoleucine 21, glutamine 39–phenylalanine 59, tryptophan 87–isoleucine 107, leucine 111–alanine 131, alanine 149–alanine 169, alanine 183–valine 203, alanine 218–leucine 238, and methionine 246–tryptophan 266.

This sequence belongs to the UppP family.

It is found in the cell inner membrane. The enzyme catalyses di-trans,octa-cis-undecaprenyl diphosphate + H2O = di-trans,octa-cis-undecaprenyl phosphate + phosphate + H(+). Its function is as follows. Catalyzes the dephosphorylation of undecaprenyl diphosphate (UPP). Confers resistance to bacitracin. The sequence is that of Undecaprenyl-diphosphatase from Shewanella denitrificans (strain OS217 / ATCC BAA-1090 / DSM 15013).